The chain runs to 163 residues: Lysosomal enzyme trafficking factor (163 aa).

Helical transmembrane passes span 40–60 (MGWIGVGLYLLASAAAFYYVF) and 98–118 (LPFWVWTVIFLVPYLQMFLFL).

This sequence belongs to the LYSET family. In terms of assembly, interacts with GNPTAB; this interaction is important for proper localization of GNPTAB in Golgi stacks. Interacts with MBTPS1.

Its subcellular location is the golgi apparatus membrane. Its function is as follows. Required for mannose-6-phosphate-dependent trafficking of lysosomal enzymes. LYSET bridges GlcNAc-1-phosphate transferase (GNPTAB), to the membrane-bound transcription factor site-1 protease (MBTPS1), thus allowing proteolytic activation of the GNPTAB. GNPTAB is involved in the regulation of M6P-dependent Golgi-to-lysosome trafficking of lysosomal enzymes. LYSET is thus an essential factor for maturation and delivery of lysosomal hydrolases. (Microbial infection) Essential for infection by muliple viruses, including SARS-CoV-2, that utilize activated cathepsins for entry after M6P-dependent lysosomal transport. This chain is Lysosomal enzyme trafficking factor, found in Homo sapiens (Human).